Reading from the N-terminus, the 322-residue chain is Ferredoxin--NADP reductase (322 aa).

7 residues coordinate FAD: Asp-33, Gln-41, Tyr-46, Ala-86, Phe-120, Asp-278, and Ser-319.

The protein belongs to the ferredoxin--NADP reductase type 2 family. Homodimer. FAD serves as cofactor.

It carries out the reaction 2 reduced [2Fe-2S]-[ferredoxin] + NADP(+) + H(+) = 2 oxidized [2Fe-2S]-[ferredoxin] + NADPH. The polypeptide is Ferredoxin--NADP reductase (Salinispora tropica (strain ATCC BAA-916 / DSM 44818 / JCM 13857 / NBRC 105044 / CNB-440)).